Here is a 647-residue protein sequence, read N- to C-terminus: UvrABC system protein C (647 aa).

In terms of domain architecture, GIY-YIG spans 16–95 (VEPGVYRFRD…IKEFDPRFNV (80 aa)). The 36-residue stretch at 208-243 (DRYARELEQQMNAAAENLDFERAARLRDDRSALKRA) folds into the UVR domain.

The protein belongs to the UvrC family. As to quaternary structure, interacts with UvrB in an incision complex.

Its subcellular location is the cytoplasm. Its function is as follows. The UvrABC repair system catalyzes the recognition and processing of DNA lesions. UvrC both incises the 5' and 3' sides of the lesion. The N-terminal half is responsible for the 3' incision and the C-terminal half is responsible for the 5' incision. The chain is UvrABC system protein C from Mycobacterium marinum (strain ATCC BAA-535 / M).